Reading from the N-terminus, the 119-residue chain is uncharacterized protein (119 aa).

This is an uncharacterized protein from Homo sapiens (Human).